A 259-amino-acid chain; its full sequence is Ribonuclease HII (259 aa).

In terms of domain architecture, RNase H type-2 spans 70 to 258 (TLIAGIDEVG…VKSLVLGKKE (189 aa)). The a divalent metal cation site is built by aspartate 76, glutamate 77, and aspartate 168.

This sequence belongs to the RNase HII family. It depends on Mn(2+) as a cofactor. Requires Mg(2+) as cofactor.

The protein localises to the cytoplasm. The catalysed reaction is Endonucleolytic cleavage to 5'-phosphomonoester.. In terms of biological role, endonuclease that specifically degrades the RNA of RNA-DNA hybrids. The polypeptide is Ribonuclease HII (Streptococcus pneumoniae (strain P1031)).